The following is a 227-amino-acid chain: Ribose-5-phosphate isomerase A (227 aa).

Residues 26-29, 82-85, and 95-98 contribute to the substrate site; these read TGST, DGAD, and KGGG. Residue E104 is the Proton acceptor of the active site. Residue K122 coordinates substrate.

Belongs to the ribose 5-phosphate isomerase family. Homodimer.

The catalysed reaction is aldehydo-D-ribose 5-phosphate = D-ribulose 5-phosphate. Its pathway is carbohydrate degradation; pentose phosphate pathway; D-ribose 5-phosphate from D-ribulose 5-phosphate (non-oxidative stage): step 1/1. Its function is as follows. Catalyzes the reversible conversion of ribose-5-phosphate to ribulose 5-phosphate. The chain is Ribose-5-phosphate isomerase A from Streptococcus pyogenes serotype M5 (strain Manfredo).